The primary structure comprises 119 residues: Ribonuclease P protein component (119 aa).

This sequence belongs to the RnpA family. As to quaternary structure, consists of a catalytic RNA component (M1 or rnpB) and a protein subunit.

It carries out the reaction Endonucleolytic cleavage of RNA, removing 5'-extranucleotides from tRNA precursor.. In terms of biological role, RNaseP catalyzes the removal of the 5'-leader sequence from pre-tRNA to produce the mature 5'-terminus. It can also cleave other RNA substrates such as 4.5S RNA. The protein component plays an auxiliary but essential role in vivo by binding to the 5'-leader sequence and broadening the substrate specificity of the ribozyme. The polypeptide is Ribonuclease P protein component (Syntrophomonas wolfei subsp. wolfei (strain DSM 2245B / Goettingen)).